The following is a 163-amino-acid chain: UPF0478 protein SAB1599c (163 aa).

The helical transmembrane segment at 7–27 (IAGIIAAIAFLILCIGIVAVL) threads the bilayer.

This sequence belongs to the UPF0478 family.

The protein resides in the cell membrane. The sequence is that of UPF0478 protein SAB1599c from Staphylococcus aureus (strain bovine RF122 / ET3-1).